Consider the following 214-residue polypeptide: ATP-dependent Clp protease proteolytic subunit 2 (214 aa).

Ser110 acts as the Nucleophile in catalysis. Residue His135 is part of the active site.

This sequence belongs to the peptidase S14 family. In terms of assembly, fourteen ClpP subunits assemble into 2 heptameric rings which stack back to back to give a disk-like structure with a central cavity, resembling the structure of eukaryotic proteasomes.

It is found in the cytoplasm. The catalysed reaction is Hydrolysis of proteins to small peptides in the presence of ATP and magnesium. alpha-casein is the usual test substrate. In the absence of ATP, only oligopeptides shorter than five residues are hydrolyzed (such as succinyl-Leu-Tyr-|-NHMec, and Leu-Tyr-Leu-|-Tyr-Trp, in which cleavage of the -Tyr-|-Leu- and -Tyr-|-Trp bonds also occurs).. In terms of biological role, cleaves peptides in various proteins in a process that requires ATP hydrolysis. Has a chymotrypsin-like activity. Plays a major role in the degradation of misfolded proteins. In Mycobacterium leprae (strain TN), this protein is ATP-dependent Clp protease proteolytic subunit 2.